The following is a 61-amino-acid chain: MSFLKKSLFLVLFLGLVSFSICEEEKRETEEEENKDETEEQSEEKKRFEPVPPGFTPFRLT.

Positions Met1–Cys22 are cleaved as a signal peptide. Positions Glu23 to Phe48 are excised as a propeptide. Residues Glu24–Thr61 form a disordered region. The span at Glu30–Ser42 shows a compositional bias: acidic residues.

It belongs to the frog skin active peptide (FSAP) family. Bradykinin-related peptide subfamily. As to expression, expressed by the skin glands.

It is found in the secreted. In terms of biological role, may produce in vitro relaxation of rat arterial smooth muscle and constriction of intestinal smooth muscle. May target bradykinin receptors (BDKRB). The chain is Probradykinin-1 from Pithecopus azureus (Orange-legged monkey tree frog).